Consider the following 329-residue polypeptide: 4-hydroxythreonine-4-phosphate dehydrogenase (329 aa).

His136 and Thr137 together coordinate substrate. His166, His211, and His266 together coordinate a divalent metal cation. Lys274, Asn283, and Arg292 together coordinate substrate.

It belongs to the PdxA family. As to quaternary structure, homodimer. Requires Zn(2+) as cofactor. The cofactor is Mg(2+). Co(2+) serves as cofactor.

The protein localises to the cytoplasm. It catalyses the reaction 4-(phosphooxy)-L-threonine + NAD(+) = 3-amino-2-oxopropyl phosphate + CO2 + NADH. It functions in the pathway cofactor biosynthesis; pyridoxine 5'-phosphate biosynthesis; pyridoxine 5'-phosphate from D-erythrose 4-phosphate: step 4/5. Catalyzes the NAD(P)-dependent oxidation of 4-(phosphooxy)-L-threonine (HTP) into 2-amino-3-oxo-4-(phosphooxy)butyric acid which spontaneously decarboxylates to form 3-amino-2-oxopropyl phosphate (AHAP). This chain is 4-hydroxythreonine-4-phosphate dehydrogenase, found in Shigella boydii serotype 18 (strain CDC 3083-94 / BS512).